We begin with the raw amino-acid sequence, 35 residues long: Cupiennin-1a (35 aa).

Position 35 is a glutamic acid 1-amide (E35).

It belongs to the cationic peptide 04 (cupiennin) family. 01 subfamily. Monomer. Interacts with CSTX-1 (AC P81694), CSTX-9 (AC P58604), and CSTX-13 (AC P83919). As to expression, expressed by the venom gland.

The protein resides in the secreted. Functionally, has antimicrobial activity against B.subtilis, E.coli, E.faecalis, P.denitrificans, P.aeruginosa, P.putida, S.aureus, and S.epidermidis. Shows insecticidal and hemolytic activities. Probably acts by disturbing membrane function with its amphipathic structure. Synergistically increases the insecticidal activity of CSTX-1 (AC P81694), CSTX-9 (AC P58604), and CSTX-13 (AC P83919) by up to 65%. Also inhibits the formation of nitric oxide by neuronal nitric oxide synthase. The sequence is that of Cupiennin-1a from Cupiennius salei (American wandering spider).